The chain runs to 229 residues: 2-C-methyl-D-erythritol 4-phosphate cytidylyltransferase (229 aa).

It belongs to the IspD/TarI cytidylyltransferase family. IspD subfamily.

The catalysed reaction is 2-C-methyl-D-erythritol 4-phosphate + CTP + H(+) = 4-CDP-2-C-methyl-D-erythritol + diphosphate. Its pathway is isoprenoid biosynthesis; isopentenyl diphosphate biosynthesis via DXP pathway; isopentenyl diphosphate from 1-deoxy-D-xylulose 5-phosphate: step 2/6. In terms of biological role, catalyzes the formation of 4-diphosphocytidyl-2-C-methyl-D-erythritol from CTP and 2-C-methyl-D-erythritol 4-phosphate (MEP). The polypeptide is 2-C-methyl-D-erythritol 4-phosphate cytidylyltransferase (Clostridium acetobutylicum (strain ATCC 824 / DSM 792 / JCM 1419 / IAM 19013 / LMG 5710 / NBRC 13948 / NRRL B-527 / VKM B-1787 / 2291 / W)).